We begin with the raw amino-acid sequence, 327 residues long: Aromatase (327 aa).

Position 315 (cysteine 315) interacts with heme.

The protein belongs to the cytochrome P450 family. Heme is required as a cofactor.

The protein localises to the membrane. It catalyses the reaction testosterone + 3 reduced [NADPH--hemoprotein reductase] + 3 O2 = 17beta-estradiol + formate + 3 oxidized [NADPH--hemoprotein reductase] + 4 H2O + 4 H(+). It carries out the reaction androst-4-ene-3,17-dione + 3 reduced [NADPH--hemoprotein reductase] + 3 O2 = estrone + formate + 3 oxidized [NADPH--hemoprotein reductase] + 4 H2O + 4 H(+). Its function is as follows. Catalyzes the formation of aromatic C18 estrogens from C19 androgens. The polypeptide is Aromatase (CYP19A1) (Coturnix japonica (Japanese quail)).